The primary structure comprises 180 residues: Homeobox protein ceh-12 (180 aa).

The segment at 15–37 is disordered; that stretch reads SSQNEDQKLESHPSPPSQIPNYS. Residues 110–169 constitute a DNA-binding region (homeobox); sequence MRRPRTAFSSEQLVQLEKQFSDNRYLSRPRRYQLAQQLSLSETQIKIWFQNRRMKNKRCP.

Expressed in VB motor neurons in the ventral nerve cord.

The protein localises to the nucleus. Transcription factor. Plays a role, downstream from homeobox protein unc-4 and Wnt signaling, in specifying synaptic inputs to A-class motor neurons. Involved in patterning of the synaptic outputs of the postmitotic DA class cholinergic motor neurons. This Caenorhabditis elegans protein is Homeobox protein ceh-12 (ceh-12).